Consider the following 352-residue polypeptide: Selenide, water dikinase (352 aa).

C23 is an active-site residue. ATP contacts are provided by residues K26 and 54 to 56 (SRD). Position 57 (D57) interacts with Mg(2+). ATP is bound by residues D74, D97, and 145–147 (GHS). Position 97 (D97) interacts with Mg(2+). Residue D233 participates in Mg(2+) binding.

Belongs to the selenophosphate synthase 1 family. Class I subfamily. Homodimer. Requires Mg(2+) as cofactor.

It carries out the reaction hydrogenselenide + ATP + H2O = selenophosphate + AMP + phosphate + 2 H(+). In terms of biological role, synthesizes selenophosphate from selenide and ATP. The sequence is that of Selenide, water dikinase from Shewanella sp. (strain ANA-3).